A 590-amino-acid polypeptide reads, in one-letter code: Nuclear receptor subfamily 2 group C member 1 (590 aa).

A required for interaction with KAT2B region spans residues 1–166 (MATIEEIAHQ…RLQRCIAFGM (166 aa)). A DNA-binding region (nuclear receptor) is located at residues 98–173 (FDLCVVCGDK…FGMKQDSVQC (76 aa)). NR C4-type zinc fingers lie at residues 101-121 (CVVC…CEGC) and 137-156 (CRGS…CQYC). Residues Ser-185 and Ser-203 each carry the phosphoserine modification. Thr-208 carries the phosphothreonine modification. Thr-210 carries the post-translational modification Phosphothreonine; by MAPK1. Residue Lys-238 forms a Glycyl lysine isopeptide (Lys-Gly) (interchain with G-Cter in SUMO); alternate linkage. Lys-238 is covalently cross-linked (Glycyl lysine isopeptide (Lys-Gly) (interchain with G-Cter in SUMO2); alternate). The 245-residue stretch at 333–577 (EGMEGSPHLI…SVIPHILKME (245 aa)) folds into the NR LBD domain. 2 positions are modified to phosphoserine; by PKC: Ser-461 and Ser-568. Residues 571 to 590 (PHILKMEPADYNSQIIGHSL) form a required for interaction with NRIP1 region. Residue Lys-575 forms a Glycyl lysine isopeptide (Lys-Gly) (interchain with G-Cter in SUMO2) linkage.

It belongs to the nuclear hormone receptor family. NR2 subfamily. In terms of assembly, homodimer. Heterodimer; with NR2C2 which is required for chromatin remodeling and for binding to promoter regions such as globin DR1 repeats. Interacts with ESR1; the interaction prevents homodimerization of ESR1 and suppresses its transcriptional activity and cell growth. Interacts with NRIP1 (via its LXXLL motifs); the interaction provides corepressor activity. Interacts with HDAC3 (via the DNA-binding domain); the interaction recruits phosphorylated NR2C1 to PML bodies for sumoylation. Interacts with HDAC4 (via the DNA-binding domain). Interacts with PIAS1; the interaction is required for sumoylation of NR2C1. Interacts with UBE2I; the interaction is required for sumoylation of NR2C1. Interacts with KAT2B; the interaction acts as a corepressor of gene expression. In terms of processing, sumoylation requires both PIAS1 and UBE2I. Sumoylation appears to dissociate NR2C1 from the PML nuclear bodies. Enhances the interaction with NRIP1 but inhibits interaction with KAT2B. In proliferating cells, stimulation by all-trans retinoic acid, activation of MAPK1-mediated phosphorylation and recruitment to PML bodies with subsequent sumoylation, suppresses OCT4 expression. Phosphorylated on several serine and threonine residues. Phosphorylation on Thr-210, stimulated by all-trans retinoic acid (atRA) mediates PML location and sumoylation in proliferating cells which then modulates its association with effector molecules, KAT2B and NRIP1. Phosphorylation on Ser-568 by PKC is important for protein stability and function as activator of RARB. Isoform 1 is highly expressed in the adlumenal compartment of the seminiferous tubule of adult testes (at protein level) and in the eyes of newborn animals. Weakly expressed in other adult organs including the seminal vesicle, prostate, ovary, adrenal gland, heart, thymus, placenta and brain. Expressed during embryonic stages in developing eyes, brain and cartilage primordia (at protein level). Also expressed in the developing spinal motor neurons and in the sympathetic-, parasympathetic- and sensory ganglia of the embryonic PNS. Expressed in the developing neural epithelia of the inner ear, nasal cavity, tongue and retina. At day 16.5, expressed in various tissues including kidney and intestine. In contrast, isoform 2 is widely expressed at a low level throughout the adult testis.

The protein localises to the nucleus. It localises to the PML body. Orphan nuclear receptor. Binds the IR7 element in the promoter of its own gene in an autoregulatory negative feedback mechanism. Primarily repressor of a broad range of genes including ESR1 and RARB. Together with NR2C2, forms the core of the DRED (direct repeat erythroid-definitive) complex that represses embryonic and fetal globin transcription. Binds to hormone response elements (HREs) consisting of two 5'-AGGTCA-3' half site direct repeat consensus sequences. Also activator of OCT4 gene expression. Plays a fundamental role in early embryogenesis and regulates embryonic stem cell proliferation and differentiation. Mediator of retinoic acid-regulated preadipocyte proliferation. In Mus musculus (Mouse), this protein is Nuclear receptor subfamily 2 group C member 1.